The chain runs to 432 residues: D-amino acid dehydrogenase (432 aa).

3–17 (VVILGSGVVGVTSAW) lines the FAD pocket.

Belongs to the DadA oxidoreductase family. The cofactor is FAD.

It catalyses the reaction a D-alpha-amino acid + A + H2O = a 2-oxocarboxylate + AH2 + NH4(+). It functions in the pathway amino-acid degradation; D-alanine degradation; NH(3) and pyruvate from D-alanine: step 1/1. Oxidative deamination of D-amino acids. The sequence is that of D-amino acid dehydrogenase from Salmonella arizonae (strain ATCC BAA-731 / CDC346-86 / RSK2980).